The following is a 738-amino-acid chain: Interleukin-17 receptor D (738 aa).

A signal peptide spans 1-16 (MAPWLQLCSFFFTVNA). The Extracellular portion of the chain corresponds to 17-299 (CLNGSQLAVA…VQSPWAGPIR (283 aa)). N-linked (GlcNAc...) asparagine glycosylation is found at Asn-19, Asn-55, Asn-62, Asn-80, Asn-137, Asn-171, Asn-206, and Asn-277. The chain crosses the membrane as a helical span at residues 300 to 320 (AVAITVPLVVISAFATLFTVM). Topologically, residues 321–738 (CRKKQQENIY…TDELQALAPL (418 aa)) are cytoplasmic. The 155-residue stretch at 355-509 (QPKVFLCYSN…LMDHLPELCA (155 aa)) folds into the SEFIR domain. The interval 653–738 (GSPSEMPRDS…TDELQALAPL (86 aa)) is disordered. Residues 667–702 (SSVPSSELSLPLMEGLSPDQIETSSLTESVSSSSGL) are compositionally biased toward low complexity. Residues 720-731 (SREHGCHSHTDE) show a composition bias toward basic and acidic residues.

Self-associates. Interacts with FGFR2 and phosphorylated MAP2K1 or MAP2K2. Associates with a MAP2K1/2-MAPK1/3 complex. Interacts with FGFR1 and MAP3K7.

The protein localises to the golgi apparatus membrane. It localises to the cell membrane. Functionally, feedback inhibitor of fibroblast growth factor mediated Ras-MAPK signaling and ERK activation. Regulates the nuclear ERK signaling pathway by spatially blocking nuclear translocation of activated ERK. Mediates JNK activation and may be involved in apoptosis. May inhibit FGF-induced FGFR1 tyrosine phosphorylation. Might have a role in the early stages of fate specification of GnRH-secreting neurons. Inhibits TGFB-induced epithelial-to-mesenchymal transition in lens epithelial cells. This chain is Interleukin-17 receptor D (Il17rd), found in Mus musculus (Mouse).